The following is a 165-amino-acid chain: Small ribosomal subunit protein uS5 (165 aa).

The 64-residue stretch at 13 to 76 (LEEKVLVVNR…EAARKNLITI (64 aa)) folds into the S5 DRBM domain.

Belongs to the universal ribosomal protein uS5 family. As to quaternary structure, part of the 30S ribosomal subunit. Contacts proteins S4 and S8.

With S4 and S12 plays an important role in translational accuracy. In terms of biological role, located at the back of the 30S subunit body where it stabilizes the conformation of the head with respect to the body. In Chlamydia caviae (strain ATCC VR-813 / DSM 19441 / 03DC25 / GPIC) (Chlamydophila caviae), this protein is Small ribosomal subunit protein uS5.